Here is a 262-residue protein sequence, read N- to C-terminus: Taurine import ATP-binding protein TauB (262 aa).

Positions 4 to 234 constitute an ABC transporter domain; that stretch reads VDHASVFFAA…RFAETGDARS (231 aa). An ATP-binding site is contributed by 39-46; the sequence is GASGCGKS.

This sequence belongs to the ABC transporter superfamily. Taurine importer (TC 3.A.1.17.1) family. As to quaternary structure, the complex is composed of two ATP-binding proteins (TauB), two transmembrane proteins (TauC) and a solute-binding protein (TauA).

The protein localises to the cell inner membrane. The catalysed reaction is taurine(out) + ATP + H2O = taurine(in) + ADP + phosphate + H(+). Functionally, part of the ABC transporter complex TauABC involved in taurine import. Responsible for energy coupling to the transport system. This chain is Taurine import ATP-binding protein TauB, found in Rhizobium johnstonii (strain DSM 114642 / LMG 32736 / 3841) (Rhizobium leguminosarum bv. viciae).